The primary structure comprises 98 residues: uncharacterized protein (98 aa).

The first 23 residues, 1–23, serve as a signal peptide directing secretion; that stretch reads MKYVALAFVLSLVILQISAQVGA.

Nacreous layer of shell (at protein level). Expressed primarily in the mantle with highest level in the mantle pallium and lower level in the mantle edge.

Its subcellular location is the secreted. This is an uncharacterized protein from Pinctada maxima (Silver-lipped pearl oyster).